Here is a 480-residue protein sequence, read N- to C-terminus: MGLVIYDTLARRKVPFEPAVPGHVGIYVCGPTVYADPHLGHARGPVVYDVLRRYLLHKGYKVRFVSNITDVGHLTDDADEGEDKIVRRAKLERLEPMEVAEKYTWSYFDAMQALNVLRPSIAPRASGHIPEMLELTERLLARGVAYERKGSVYFRVRSFPEYGKLSGKRLEELRAGARVEVREEKEDPLDFALWKAAEPGHIMRWKSPWGEGYPGWHIECTAMSLKYLGEGFDLHAGGIDLQFPHHECEIAQAEAAGFRFARHWMHHNHVLLEGEKMAKSTGNLVLLHDLLEAHEPMALRFYLLQTHYRSPMDFTWEGLESAKRGYGRLLHAYREVRGRKKTAPPGTTPELERALDALEKAFMEAIEDDLSTPEALAALFAFLPELHKLLPEAKAESLARAEAVFHTLGEGILGLFPERVLEERVSGPLLEGLIALLLELREEARRAKDYEKSDLIRERLRALGVIVEDTKEGPRWRLER.

Cys29 contributes to the Zn(2+) binding site. Positions 31–41 (PTVYADPHLGH) match the 'HIGH' region motif. Zn(2+) is bound by residues Cys220, His245, and Glu249. The 'KMSKS' region motif lies at 276-280 (KMAKS). An ATP-binding site is contributed by Lys279.

Belongs to the class-I aminoacyl-tRNA synthetase family. As to quaternary structure, monomer. Requires Zn(2+) as cofactor.

Its subcellular location is the cytoplasm. It catalyses the reaction tRNA(Cys) + L-cysteine + ATP = L-cysteinyl-tRNA(Cys) + AMP + diphosphate. This Thermus thermophilus (strain ATCC 27634 / DSM 579 / HB8) protein is Cysteine--tRNA ligase.